A 307-amino-acid polypeptide reads, in one-letter code: MFRQRTIQNLVRTTGVGVHSGRRVELTLRPAQPNTGIVFHRVDLPQVVDLPAQATGVGDTRMASVLQQGNVRVSTVEHLMSALAGLGIDNLHVDLTAEEVPIMDGSAATFVYLLRSAGIVEQNAPKHFIRVLKPIEVREGEGRNEKWARLEPHEGFALAFSIDFRHPAIDSTANFAEIDFATHSYVREIARARTFGFVNEVEALRSMGLARGGSLDNAIVMDEFRVLNSDGLRYDDEFVKHKILDAIGDLYLLGKPLVARYVAQKSGHALNNQLARALLEQQDAWELVTYESQAEAPQAFRHEWKLA.

H78, H241, and D245 together coordinate Zn(2+). H268 serves as the catalytic Proton donor.

The protein belongs to the LpxC family. Zn(2+) is required as a cofactor.

The enzyme catalyses a UDP-3-O-[(3R)-3-hydroxyacyl]-N-acetyl-alpha-D-glucosamine + H2O = a UDP-3-O-[(3R)-3-hydroxyacyl]-alpha-D-glucosamine + acetate. Its pathway is glycolipid biosynthesis; lipid IV(A) biosynthesis; lipid IV(A) from (3R)-3-hydroxytetradecanoyl-[acyl-carrier-protein] and UDP-N-acetyl-alpha-D-glucosamine: step 2/6. In terms of biological role, catalyzes the hydrolysis of UDP-3-O-myristoyl-N-acetylglucosamine to form UDP-3-O-myristoylglucosamine and acetate, the committed step in lipid A biosynthesis. In Bordetella avium (strain 197N), this protein is UDP-3-O-acyl-N-acetylglucosamine deacetylase.